The chain runs to 63 residues: Iota-crystallin (63 aa).

The protein belongs to the calycin superfamily. Fatty-acid binding protein (FABP) family.

Functionally, binds vitamin A2 in the eye lens and thus functions as a UV filter. Intracellular transport of retinol. In Gonatodes vittatus (Wiegmann's striped gecko), this protein is Iota-crystallin (CRBPI).